Here is a 531-residue protein sequence, read N- to C-terminus: Light-independent protochlorophyllide reductase subunit B (531 aa).

D36 is a [4Fe-4S] cluster binding site. Residue D287 is the Proton donor of the active site. 422 to 423 serves as a coordination point for substrate; the sequence is GL.

The protein belongs to the ChlB/BchB/BchZ family. As to quaternary structure, protochlorophyllide reductase is composed of three subunits; BchL, BchN and BchB. Forms a heterotetramer of two BchB and two BchN subunits. [4Fe-4S] cluster serves as cofactor.

It carries out the reaction chlorophyllide a + oxidized 2[4Fe-4S]-[ferredoxin] + 2 ADP + 2 phosphate = protochlorophyllide a + reduced 2[4Fe-4S]-[ferredoxin] + 2 ATP + 2 H2O. Its pathway is porphyrin-containing compound metabolism; bacteriochlorophyll biosynthesis (light-independent). In terms of biological role, component of the dark-operative protochlorophyllide reductase (DPOR) that uses Mg-ATP and reduced ferredoxin to reduce ring D of protochlorophyllide (Pchlide) to form chlorophyllide a (Chlide). This reaction is light-independent. The NB-protein (BchN-BchB) is the catalytic component of the complex. The sequence is that of Light-independent protochlorophyllide reductase subunit B from Rhodopseudomonas palustris (strain BisA53).